A 157-amino-acid polypeptide reads, in one-letter code: MPDLVAYTDGACSGNPGPGGWGALMRAKDGDTILKERELKGGEADTTNNRMELLAAISALEALDRPSTLTIITDSAYVKNGITGWMHGWKRNGWKTSTRKPVKNVDLWQRLDEAQSRHTVTWEWIKGHAGHEGNEKADELARAGMAPFKTGKRGKDG.

An RNase H type-1 domain is found at 1–146 (MPDLVAYTDG…ADELARAGMA (146 aa)). Mg(2+) is bound by residues D9, E52, D74, and D138.

This sequence belongs to the RNase H family. In terms of assembly, monomer. The cofactor is Mg(2+).

It is found in the cytoplasm. The enzyme catalyses Endonucleolytic cleavage to 5'-phosphomonoester.. Its function is as follows. Endonuclease that specifically degrades the RNA of RNA-DNA hybrids. The sequence is that of Ribonuclease H from Jannaschia sp. (strain CCS1).